We begin with the raw amino-acid sequence, 581 residues long: Intermediate filament protein ifa-3 (581 aa).

Residues 1-33 (MADPDSYRSSITSRPAFNRTVTSSTQNYGTPAS) are disordered. A head region spans residues 1-74 (MADPDSYRSS…RDDREREKKE (74 aa)). Polar residues predominate over residues 7–33 (YRSSITSRPAFNRTVTSSTQNYGTPAS). The 354-residue stretch at 71–424 (EKKEITELND…RMLEGNSEEN (354 aa)) folds into the IF rod domain. The coil 1A stretch occupies residues 75–106 (ITELNDRLASYIGKVRFLAAQNRKLEADLNVL). The interval 107–120 (QSRFGKSTGSVKIM) is linker 1. The coil 1B stretch occupies residues 121 to 258 (YEMEITTATN…RGFETELKDL (138 aa)). Residues 259 to 276 (QAQAARDTTSENREYFKN) are linker 12. The interval 277–424 (ELMNSIRDIR…RMLEGNSEEN (148 aa)) is coil 2. A tail region spans residues 425 to 578 (GLRQLVEKVV…THMQRQSQQT (154 aa)). Positions 457–574 (SRTSYQRSAK…EERATHMQRQ (118 aa)) constitute an LTD domain.

This sequence belongs to the intermediate filament family. Forms some heteromeric filaments with ifb-1. In terms of tissue distribution, expressed in the embryonic and larval hypodermis. Also expressed in the ventral nerve cord of larvae.

It localises to the cytoplasm. Its function is as follows. Cytoplasmic intermediate filaments provide mechanical strength to cells. Essential protein, involved in attachment structures in epidermal cells that connect muscles to the external cuticle. Required for epidermal morphogenesis in embryos. Probable component of embryonic epidermal attachment structures. This Caenorhabditis elegans protein is Intermediate filament protein ifa-3 (ifa-3).